The chain runs to 79 residues: Small ribosomal subunit protein bS18 (79 aa).

Belongs to the bacterial ribosomal protein bS18 family. Part of the 30S ribosomal subunit. Forms a tight heterodimer with protein bS6.

In terms of biological role, binds as a heterodimer with protein bS6 to the central domain of the 16S rRNA, where it helps stabilize the platform of the 30S subunit. This is Small ribosomal subunit protein bS18 from Ureaplasma parvum serovar 3 (strain ATCC 27815 / 27 / NCTC 11736).